We begin with the raw amino-acid sequence, 460 residues long: Bifunctional protein GlmU (460 aa).

Positions 1–232 (MALNVVILAA…AIEVEGANNR (232 aa)) are pyrophosphorylase. UDP-N-acetyl-alpha-D-glucosamine-binding positions include 8 to 11 (LAAG), K22, Q73, 78 to 79 (GT), 100 to 102 (YGD), G137, E157, N172, and N230. Position 102 (D102) interacts with Mg(2+). N230 lines the Mg(2+) pocket. The interval 233-253 (VQLAQLERAYQAREAEKLMLA) is linker. Positions 254 to 460 (GANLRDPSRI…GWQRPVKIKK (207 aa)) are N-acetyltransferase. Residues R336 and K354 each contribute to the UDP-N-acetyl-alpha-D-glucosamine site. The active-site Proton acceptor is H366. UDP-N-acetyl-alpha-D-glucosamine contacts are provided by Y369 and N380. Residues A383, 389 to 390 (NY), S408, A426, and R443 contribute to the acetyl-CoA site.

The protein in the N-terminal section; belongs to the N-acetylglucosamine-1-phosphate uridyltransferase family. In the C-terminal section; belongs to the transferase hexapeptide repeat family. Homotrimer. Mg(2+) serves as cofactor.

Its subcellular location is the cytoplasm. It carries out the reaction alpha-D-glucosamine 1-phosphate + acetyl-CoA = N-acetyl-alpha-D-glucosamine 1-phosphate + CoA + H(+). The catalysed reaction is N-acetyl-alpha-D-glucosamine 1-phosphate + UTP + H(+) = UDP-N-acetyl-alpha-D-glucosamine + diphosphate. Its pathway is nucleotide-sugar biosynthesis; UDP-N-acetyl-alpha-D-glucosamine biosynthesis; N-acetyl-alpha-D-glucosamine 1-phosphate from alpha-D-glucosamine 6-phosphate (route II): step 2/2. It participates in nucleotide-sugar biosynthesis; UDP-N-acetyl-alpha-D-glucosamine biosynthesis; UDP-N-acetyl-alpha-D-glucosamine from N-acetyl-alpha-D-glucosamine 1-phosphate: step 1/1. The protein operates within bacterial outer membrane biogenesis; LPS lipid A biosynthesis. Its function is as follows. Catalyzes the last two sequential reactions in the de novo biosynthetic pathway for UDP-N-acetylglucosamine (UDP-GlcNAc). The C-terminal domain catalyzes the transfer of acetyl group from acetyl coenzyme A to glucosamine-1-phosphate (GlcN-1-P) to produce N-acetylglucosamine-1-phosphate (GlcNAc-1-P), which is converted into UDP-GlcNAc by the transfer of uridine 5-monophosphate (from uridine 5-triphosphate), a reaction catalyzed by the N-terminal domain. This Shewanella baltica (strain OS185) protein is Bifunctional protein GlmU.